The chain runs to 494 residues: Cytochrome P450 2A13 (494 aa).

Asparagine 297 lines the substrate pocket. A heme-binding site is contributed by cysteine 439.

This sequence belongs to the cytochrome P450 family. Heme is required as a cofactor. As to expression, expressed in liver and a number of extrahepatic tissues, including nasal mucosa, lung, trachea, brain, mammary gland, prostate, testis, and uterus, but not in heart, kidney, bone marrow, colon, small intestine, spleen, stomach, thymus, or skeletal muscle.

The protein resides in the endoplasmic reticulum membrane. The protein localises to the microsome membrane. The enzyme catalyses an organic molecule + reduced [NADPH--hemoprotein reductase] + O2 = an alcohol + oxidized [NADPH--hemoprotein reductase] + H2O + H(+). Functionally, exhibits a coumarin 7-hydroxylase activity. Active in the metabolic activation of hexamethylphosphoramide, N,N-dimethylaniline, 2'-methoxyacetophenone, N-nitrosomethylphenylamine, and the tobacco-specific carcinogen, 4-(methylnitrosamino)-1-(3-pyridyl)-1-butanone. Possesses phenacetin O-deethylation activity. In Homo sapiens (Human), this protein is Cytochrome P450 2A13 (CYP2A13).